The sequence spans 223 residues: uncharacterized protein (223 aa).

A compositionally biased stretch (basic residues) spans 1–11 (MLWVQRKRRRK). Residues 1-37 (MLWVQRKRRRKETSECPSDKDKSPESHKAKNESWIKS) form a disordered region. Residues 12–37 (ETSECPSDKDKSPESHKAKNESWIKS) are compositionally biased toward basic and acidic residues. The residue at position 43 (S43) is a Phosphoserine. 2 disordered regions span residues 49–73 (LDNN…SSTV) and 196–223 (THTF…NRRH). Polar residues predominate over residues 51–61 (NNASASGNATQ). Low complexity predominate over residues 62-73 (TESGSEEVSSTV). Basic residues predominate over residues 202 to 223 (HSHHSHHGHPSHQSHSLPNRRH).

This is an uncharacterized protein from Homo sapiens (Human).